Here is a 758-residue protein sequence, read N- to C-terminus: 5-methyltetrahydropteroyltriglutamate--homocysteine methyltransferase (758 aa).

5-methyltetrahydropteroyltri-L-glutamate is bound by residues 16–19 and lysine 112; that span reads RELK. L-homocysteine is bound by residues 433–435 and glutamate 486; that span reads IGS. Residues 433 to 435 and glutamate 486 each bind L-methionine; that span reads IGS. Residues 517–518 and tryptophan 563 contribute to the 5-methyltetrahydropteroyltri-L-glutamate site; that span reads RC. Residue aspartate 601 participates in L-homocysteine binding. L-methionine is bound at residue aspartate 601. Glutamate 607 serves as a coordination point for 5-methyltetrahydropteroyltri-L-glutamate. Zn(2+) is bound by residues histidine 643, cysteine 645, and glutamate 667. Histidine 696 acts as the Proton donor in catalysis. Residue cysteine 728 participates in Zn(2+) binding.

Belongs to the vitamin-B12 independent methionine synthase family. The cofactor is Zn(2+).

The enzyme catalyses 5-methyltetrahydropteroyltri-L-glutamate + L-homocysteine = tetrahydropteroyltri-L-glutamate + L-methionine. It participates in amino-acid biosynthesis; L-methionine biosynthesis via de novo pathway; L-methionine from L-homocysteine (MetE route): step 1/1. In terms of biological role, catalyzes the transfer of a methyl group from 5-methyltetrahydrofolate to homocysteine resulting in methionine formation. This is 5-methyltetrahydropteroyltriglutamate--homocysteine methyltransferase from Neisseria meningitidis serogroup A / serotype 4A (strain DSM 15465 / Z2491).